The chain runs to 114 residues: Putative small ubiquitin-related modifier 4 (114 aa).

The disordered stretch occupies residues Met1–Lys20. Residues Thr26–Gly104 enclose the Ubiquitin-like domain. A Glycyl lysine isopeptide (Gly-Lys) (interchain with K-? in acceptor proteins) cross-link involves residue Gly104.

It belongs to the ubiquitin family. SUMO subfamily. In terms of assembly, interacts with SAE2, SCE1, SIZ1 and MMS21 Covalently attached to a number of proteins.

It is found in the nucleus. Its subcellular location is the cytoplasm. Its function is as follows. Ubiquitin-like protein which can be covalently attached to target lysines as a monomer. Does not seem to be involved in protein degradation and may function as an antagonist of ubiquitin in the degradation process. The polypeptide is Putative small ubiquitin-related modifier 4 (SUMO4) (Arabidopsis thaliana (Mouse-ear cress)).